The sequence spans 256 residues: Dihydroorotate dehydrogenase B (NAD(+)), electron transfer subunit (256 aa).

One can recognise an FAD-binding FR-type domain in the interval 1 to 101 (MKKAHLTVQS…LGPLGNGFPV (101 aa)). FAD contacts are provided by residues 52-55 (RPLS), 69-71 (IYR), and 76-77 (GT). [2Fe-2S] cluster contacts are provided by cysteine 220, cysteine 225, cysteine 228, and cysteine 243.

The protein belongs to the PyrK family. As to quaternary structure, heterotetramer of 2 PyrK and 2 PyrD type B subunits. [2Fe-2S] cluster is required as a cofactor. The cofactor is FAD.

It participates in pyrimidine metabolism; UMP biosynthesis via de novo pathway; orotate from (S)-dihydroorotate (NAD(+) route): step 1/1. Functionally, responsible for channeling the electrons from the oxidation of dihydroorotate from the FMN redox center in the PyrD type B subunit to the ultimate electron acceptor NAD(+). This is Dihydroorotate dehydrogenase B (NAD(+)), electron transfer subunit from Bacillus velezensis (strain DSM 23117 / BGSC 10A6 / LMG 26770 / FZB42) (Bacillus amyloliquefaciens subsp. plantarum).